A 298-amino-acid chain; its full sequence is tRNA U34 carboxymethyltransferase (298 aa).

Carboxy-S-adenosyl-L-methionine is bound by residues lysine 69, tryptophan 83, lysine 88, glycine 107, 129–131 (DPS), 156–157 (VE), tyrosine 176, and arginine 291.

The protein belongs to the class I-like SAM-binding methyltransferase superfamily. CmoB family. Homotetramer.

The enzyme catalyses carboxy-S-adenosyl-L-methionine + 5-hydroxyuridine(34) in tRNA = 5-carboxymethoxyuridine(34) in tRNA + S-adenosyl-L-homocysteine + H(+). Catalyzes carboxymethyl transfer from carboxy-S-adenosyl-L-methionine (Cx-SAM) to 5-hydroxyuridine (ho5U) to form 5-carboxymethoxyuridine (cmo5U) at position 34 in tRNAs. The polypeptide is tRNA U34 carboxymethyltransferase (Campylobacter curvus (strain 525.92)).